Consider the following 199-residue polypeptide: Mediator of RNA polymerase II transcription subunit 7 (199 aa).

Belongs to the Mediator complex subunit 7 family. As to quaternary structure, component of the Mediator complex.

The protein resides in the nucleus. Functionally, component of the Mediator complex, a coactivator involved in the regulated transcription of nearly all RNA polymerase II-dependent genes. Mediator functions as a bridge to convey information from gene-specific regulatory proteins to the basal RNA polymerase II transcription machinery. Mediator is recruited to promoters by direct interactions with regulatory proteins and serves as a scaffold for the assembly of a functional preinitiation complex with RNA polymerase II and the general transcription factors. This Eremothecium gossypii (strain ATCC 10895 / CBS 109.51 / FGSC 9923 / NRRL Y-1056) (Yeast) protein is Mediator of RNA polymerase II transcription subunit 7 (MED7).